The primary structure comprises 191 residues: MKTLFDTKELLNEFDINLIGIDEAGRGALAGPMMMAACKLNKQLDGLCDSKKLSEKKREELYEIIIKNSNYLILAFSSEQIDALGLSTCLKKGLKLIKKHFKTENNFLYDGNTNLGINGIKTQIKADTSILQVSAASILAKVSKDRVMNFLAKDFPCYEFEKNKAYGTKAHKEFIAKFGICKLHRKSFKLL.

The RNase H type-2 domain maps to 16-191 (INLIGIDEAG…KLHRKSFKLL (176 aa)). Residues D22, E23, and D110 each coordinate a divalent metal cation.

This sequence belongs to the RNase HII family. It depends on Mn(2+) as a cofactor. Mg(2+) is required as a cofactor.

It localises to the cytoplasm. It catalyses the reaction Endonucleolytic cleavage to 5'-phosphomonoester.. Functionally, endonuclease that specifically degrades the RNA of RNA-DNA hybrids. This Campylobacter jejuni subsp. jejuni serotype O:2 (strain ATCC 700819 / NCTC 11168) protein is Ribonuclease HII (rnhB).